Consider the following 53-residue polypeptide: uncharacterized protein (53 aa).

The helical transmembrane segment at 4–23 threads the bilayer; that stretch reads STLIIIASNVVTVFVSVAVN. Residues 24–50 are a coiled coil; the sequence is RTDISWLKQRLISLEERINKLGEKHVF.

It is found in the host membrane. This is an uncharacterized protein from Pseudoalteromonas phage PM2 (Bacteriophage PM2).